A 407-amino-acid chain; its full sequence is Argininosuccinate synthase (407 aa).

ATP contacts are provided by residues 13–21 (AYSGGLDTS) and A40. The L-citrulline site is built by Y91 and S96. Residue G121 coordinates ATP. T123, N127, and D128 together coordinate L-aspartate. Residue N127 coordinates L-citrulline. Residues R131, S182, S191, E267, and Y279 each coordinate L-citrulline.

It belongs to the argininosuccinate synthase family. Type 1 subfamily. Homotetramer.

It is found in the cytoplasm. The enzyme catalyses L-citrulline + L-aspartate + ATP = 2-(N(omega)-L-arginino)succinate + AMP + diphosphate + H(+). It participates in amino-acid biosynthesis; L-arginine biosynthesis; L-arginine from L-ornithine and carbamoyl phosphate: step 2/3. The sequence is that of Argininosuccinate synthase from Agrobacterium fabrum (strain C58 / ATCC 33970) (Agrobacterium tumefaciens (strain C58)).